The following is a 103-amino-acid chain: Major carboxysome shell protein CsoS1 (103 aa).

One can recognise a BMC domain in the interval 9 to 94; it reads ALGMIETRGL…PHREVEPALG (86 aa).

It belongs to the bacterial microcompartments protein family. CsoS1 subfamily. In terms of assembly, homohexamer with a small central pore. A CsoS1-CsoS1D-CsoS2 complex can be isolated following expression in E.coli. Forms a CsoS2-CsoS1-RuBisCO complex.

Its subcellular location is the carboxysome. Functionally, the major shell protein of the carboxysome, a polyhedral inclusion where RuBisCO (ribulose bisphosphate carboxylase, ccbL-ccbS) is sequestered. Assembles into hexamers which make sheets that form the facets of the polyhedral carboxysome. There are estimated to be 538 CsoS1 hexamers per carboxysome; note this number includes the probable carboxysome shell vertex proteins CsoS4A and CsoS4B. This chain is Major carboxysome shell protein CsoS1, found in Prochlorococcus marinus subsp. pastoris (strain CCMP1986 / NIES-2087 / MED4).